The following is an 835-amino-acid chain: Transcription intermediary factor 1-beta (835 aa).

Positions 1-19 are enriched in low complexity; sequence MAASAAAASAAAASAASGS. The segment at 1-49 is disordered; it reads MAASAAAASAAAASAASGSPGPGEGSAGGEKRSTAPSAAASASASAAAS. The residue at position 2 (A2) is an N-acetylalanine. 2 positions are modified to phosphoserine: S19 and S26. A Glycyl lysine isopeptide (Lys-Gly) (interchain with G-Cter in SUMO2) cross-link involves residue K31. Residues 35 to 49 show a composition bias toward low complexity; it reads APSAAASASASAAAS. Residue S50 is modified to Phosphoserine. Residues 65-121 form an RING-type zinc finger; the sequence is CGVCRERLRPEREPRLLPCLHSACSACLGPAAPAAANSSGDGGAAGDGTVVDCPVCK. Positions 65-376 are RBCC domain; that stretch reads CGVCRERLRP…LIYFQLHRAL (312 aa). A Glycyl lysine isopeptide (Lys-Gly) (interchain with G-Cter in SUMO2) cross-link involves residue K127. Residue S138 is modified to Phosphoserine. The B box-type 1; atypical zinc-finger motif lies at 148–195; it reads DANQCCTSCEDNAPATSYCVECSEPLCETCVEAHQRVKYTKDHTVRST. Zn(2+) contacts are provided by C153, C156, C177, and H181. K199 participates in a covalent cross-link: Glycyl lysine isopeptide (Lys-Gly) (interchain with G-Cter in SUMO2). The B box-type 2 zinc finger occupies 204 to 245; that stretch reads ERTVYCNVHKHEPLVLFCESCDTLTCRDCQLNAHKDHQYQFL. Residues C209, H212, C232, and H237 each coordinate Zn(2+). A leucine zipper alpha helical coiled-coil region region spans residues 246-376; it reads EDAVRNQRKL…LIYFQLHRAL (131 aa). The segment at 247–376 is interaction with MAGEC2; it reads DAVRNQRKLL…LIYFQLHRAL (130 aa). Glycyl lysine isopeptide (Lys-Gly) (interchain with G-Cter in SUMO2) cross-links involve residues K254 and K261. K266 bears the N6-acetyllysine mark. A Glycyl lysine isopeptide (Lys-Gly) (interchain with G-Cter in SUMO2) cross-link involves residue K272. Position 304 is an N6-acetyllysine; alternate (K304). Residue K304 forms a Glycyl lysine isopeptide (Lys-Gly) (interchain with G-Cter in SUMO2); alternate linkage. Residue K319 forms a Glycyl lysine isopeptide (Lys-Gly) (interchain with G-Cter in SUMO2) linkage. Position 340 is an N6-acetyllysine (K340). A Glycyl lysine isopeptide (Lys-Gly) (interchain with G-Cter in SUMO2) cross-link involves residue K366. The tract at residues 366–370 is involved in binding PPP1CA; the sequence is KLIYF. Residue K377 is modified to N6-acetyllysine; alternate. A Glycyl lysine isopeptide (Lys-Gly) (interchain with G-Cter in SUMO2); alternate cross-link involves residue K377. A Glycyl lysine isopeptide (Lys-Gly) (interchain with G-Cter in SUMO1); alternate cross-link involves residue K377. Residue K407 forms a Glycyl lysine isopeptide (Lys-Gly) (interchain with G-Cter in SUMO2) linkage. A disordered region spans residues 411-480; it reads ERPGTNSTGP…SRSGEGEVSG (70 aa). Position 417 is a phosphoserine (S417). K434 participates in a covalent cross-link: Glycyl lysine isopeptide (Lys-Gly) (interchain with G-Cter in SUMO2). Residues 434–443 are compositionally biased toward polar residues; that stretch reads KQGSGSSQPM. Residues S437, S439, and S453 each carry the phosphoserine modification. K469 is covalently cross-linked (Glycyl lysine isopeptide (Lys-Gly) (interchain with G-Cter in SUMO2); alternate). Residue K469 forms a Glycyl lysine isopeptide (Lys-Gly) (interchain with G-Cter in SUMO1); alternate linkage. R470 carries the citrulline modification. S471 bears the Phosphoserine mark. R472 is modified (citrulline). Residues S473, S479, and S489 each carry the phosphoserine modification. The HP1 box stretch occupies residues 476 to 513; that stretch reads GEVSGLMRKVPRVSLERLDLDLTADSQPPVFKVFPGST. The short motif at 481-494 is the PxVxL motif element; sequence LMRKVPRVSLERLD. A Phosphothreonine modification is found at T498. The residue at position 501 (S501) is a Phosphoserine. Residue K507 forms a Glycyl lysine isopeptide (Lys-Gly) (interchain with G-Cter in SUMO2) linkage. T541 carries the post-translational modification Phosphothreonine. A Glycyl lysine isopeptide (Lys-Gly) (interchain with G-Cter in SUMO2); alternate cross-link involves residue K554. K554 participates in a covalent cross-link: Glycyl lysine isopeptide (Lys-Gly) (interchain with G-Cter in SUMO); alternate. Residue K575 forms a Glycyl lysine isopeptide (Lys-Gly) (interchain with G-Cter in SUMO2) linkage. The tract at residues 584–618 is disordered; sequence GPGAEGPRLASPSGSTSSGLEVVAPEGTSAPGGGP. S594 carries the post-translational modification Phosphoserine. The segment at 625 to 672 adopts a PHD-type zinc-finger fold; sequence ATICRVCQKPGDLVMCNQCEFCFHLDCHLPALQDVPGEEWSCSLCHVL. A Glycyl lysine isopeptide (Lys-Gly) (interchain with G-Cter in SUMO) cross-link involves residue K676. S683, S689, and S697 each carry phosphoserine. In terms of domain architecture, Bromo spans 695-799; sequence KLSPANQRKC…RFFETRMNEA (105 aa). K750 is covalently cross-linked (Glycyl lysine isopeptide (Lys-Gly) (interchain with G-Cter in SUMO2); alternate). A Glycyl lysine isopeptide (Lys-Gly) (interchain with G-Cter in SUMO1); alternate cross-link involves residue K750. K750 is covalently cross-linked (Glycyl lysine isopeptide (Lys-Gly) (interchain with G-Cter in SUMO); alternate). S752 is modified (phosphoserine). Y755 is modified (phosphotyrosine). S757 is modified (phosphoserine). 3 positions are modified to N6-acetyllysine; alternate: K770, K774, and K779. Residues K770, K774, and K779 each participate in a glycyl lysine isopeptide (Lys-Gly) (interchain with G-Cter in SUMO2); alternate cross-link. A Glycyl lysine isopeptide (Lys-Gly) (interchain with G-Cter in SUMO1); alternate cross-link involves residue K779. Position 784 is a phosphoserine (S784). K804 participates in a covalent cross-link: Glycyl lysine isopeptide (Lys-Gly) (interchain with G-Cter in SUMO2); alternate. K804 is covalently cross-linked (Glycyl lysine isopeptide (Lys-Gly) (interchain with G-Cter in SUMO); alternate). Residues 815 to 835 form a disordered region; the sequence is MSLPGAGLSSQELSGGPGDGP. The residue at position 824 (S824) is a Phosphoserine; by ATM and ATR and dsDNA kinase.

Belongs to the TRIM/RBCC family. In terms of assembly, interacts with SETX. Oligomer; the RBCC domain homotrimerizes and interacts with one molecule of KRAB to form the KRAB-KAP1 corepressor complex. Binding to a KRAB domain is an absolute requirement for silencing gene expression. Interacts with CEBPB and NR3C1. Interacts with a number of KRAB-ZFP proteins including ZNF10, ZFP53, ZFP68, ZNF382 and ZNF256. Interacts with NCOR1, NR3C1 and CHD3. Interacts with CEBPB (via the RING-type and PHD-type zinc fingers). Component of a ternary complex that includes TRIM28, a HP1 protein (CBX1, CBX3 OR CBX5), a KRAB domain-containing protein, and DNA. Interacts with CBX5 (via the PxVxL motif); the interaction occurs in interphase nuclei and competes for binding POGZ. Interacts with POGZ; the interaction competes for interaction with CBX5. Interacts with SETDB1; the interaction is enhanced by KAP1 sumoylation, stimulates SETDB1 histone methyltransferase activity and gene silencing. Interacts (via the PHD-type zinc finger) with UBE2I; the interaction is required for sumoylation and repressor activity. Component of the TRIM28/KAP1-ERBB4-MDM2 complex involved in connecting growth factor and DNA damage responses. Interacts directly with ERBB4; the interaction represses ERBB4-mediated transcription activity. Interacts with MDM2; the interaction contributes to p53/TP53 inactivation. Component of the TRIM28/KAP1-MDM2-p53/TP53; involved in regulating p53/TP53 stabilization and activity. Interacts (via the leucine zipper alpha helical coiled-coil) with E2F1 (central region); the interaction inhibits E2F1 acetylation and transcriptional activity. Interacts with PPP1CA; the interaction dephosphorylates TRIM28 at Ser-824 and forms a complex at the p21 promoter site. Interacts with PPP1CB; the interaction is weak but is increased on dephosphorylation at Ser-824. Interacts with FES/FPS. Interacts with SMARCAD1. Interacts with, and sumoylates IRF7. Interacts with MAGEC2. Part of a complex composed of TRIM28, HDAC1, HDAC2 and EHMT2. Interacts with AICDA. Interacts (via the RBCC domain) with KOX1 (via the KRAB domain), ZNF268 (via the KRAB domain) and ZNF300 (via the KRAB domain); the interactions increase KOX1, ZNF268 and ZNF300 nuclear localization activities. The large PER complex involved in the histone methylation is composed of at least PER2, CBX3, TRIM28, SUV39H1 and/or SUV39H2; CBX3 mediates the formation of the complex. Interacts with isoform 2 of ZFP90. Forms a complex with FOXP3 in the presence of isoform 2 of ZFP90. Interacts with NR4A3; the interactions potentiates NR4A3 activity on NurRE promoter. Interacts (unphosphorylated or phosphorylated form) with ZBTB1 (via BTB domain). Probably part of a corepressor complex containing ZNF304, TRIM28, SETDB1 and DNMT1. Interacts with ATRX. Forms a complex with ATRX, SETDB1 and ZNF274. Interacts with ZFP568; the interaction mediates ZFP568 transcriptional repression activity. Interacts with RRP1B. Interacts with CRY1. Interacts with ZNF263; recruited to the SIX3 promoter along with other proteins involved in chromatin modification and transcriptional corepression where it contributes to transcriptional repression. Interacts with CYREN (via XLF motif). Interacts with TRIM17; this interaction prevents TRIM28 activity. Interacts with ZNF746. Interacts with PHF13. Interacts with ZNF354C. Interacts with ZNF432; the interaction is independent of PARP1. (Microbial infection) Interacts with herpes virus 8 protein LANA1; this interaction facilitates establishment of viral latency. ATM-induced phosphorylation on Ser-824 represses sumoylation leading to the de-repression of expression of a subset of genes involved in cell cycle control and apoptosis in response to genotoxic stress. Dephosphorylation by the phosphatases, PPP1CA and PP1CB forms, allows sumoylation and expression of TRIM28 target genes. Post-translationally, sumoylation/desumoylation events regulate TRIM28-mediated transcriptional repression. Sumoylation is required for interaction with CHD3 and SETDB1 and the corepressor activity. Represses and is repressed by Ser-824 phosphorylation. Enhances the TRIM28 corepressor activity, inhibiting transcriptional activity of a number of genes including GADD45A and CDKN1A/p21. Lys-554, Lys-779 and Lys-804 are the major sites of sumoylation. In response to Dox-induced DNA damage, enhanced phosphorylation on Ser-824 prevents sumoylation and allows de-repression of CDKN1A/p21. In terms of processing, auto-ubiquitinated; enhanced by MAGEA2 and MAGEC2. Citrullinated by PADI4. Post-translationally, ADP-ribosylated by SIRT6, promoting TRIM28/KAP1 interaction with CBX5, thereby contributing to the packaging of LINE-1 retrotransposon elements into transcriptionally repressive heterochromatin. In terms of tissue distribution, expressed in all tissues tested including spleen, thymus, prostate, testis, ovary, small intestine, colon and peripheral blood leukocytes.

The protein localises to the nucleus. It carries out the reaction S-ubiquitinyl-[E2 ubiquitin-conjugating enzyme]-L-cysteine + [acceptor protein]-L-lysine = [E2 ubiquitin-conjugating enzyme]-L-cysteine + N(6)-ubiquitinyl-[acceptor protein]-L-lysine.. It participates in protein modification; protein sumoylation. In terms of biological role, nuclear corepressor for KRAB domain-containing zinc finger proteins (KRAB-ZFPs). Mediates gene silencing by recruiting CHD3, a subunit of the nucleosome remodeling and deacetylation (NuRD) complex, and SETDB1 (which specifically methylates histone H3 at 'Lys-9' (H3K9me)) to the promoter regions of KRAB target genes. Enhances transcriptional repression by coordinating the increase in H3K9me, the decrease in histone H3 'Lys-9 and 'Lys-14' acetylation (H3K9ac and H3K14ac, respectively) and the disposition of HP1 proteins to silence gene expression. Recruitment of SETDB1 induces heterochromatinization. May play a role as a coactivator for CEBPB and NR3C1 in the transcriptional activation of ORM1. Also a corepressor for ERBB4. Inhibits E2F1 activity by stimulating E2F1-HDAC1 complex formation and inhibiting E2F1 acetylation. May serve as a partial backup to prevent E2F1-mediated apoptosis in the absence of RB1. Important regulator of CDKN1A/p21(CIP1). Has E3 SUMO-protein ligase activity toward itself via its PHD-type zinc finger. Also specifically sumoylates IRF7, thereby inhibiting its transactivation activity. Ubiquitinates p53/TP53 leading to its proteasomal degradation; the function is enhanced by MAGEC2 and MAGEA2, and possibly MAGEA3 and MAGEA6. Mediates the nuclear localization of KOX1, ZNF268 and ZNF300 transcription factors. In association with isoform 2 of ZFP90, is required for the transcriptional repressor activity of FOXP3 and the suppressive function of regulatory T-cells (Treg). Probably forms a corepressor complex required for activated KRAS-mediated promoter hypermethylation and transcriptional silencing of tumor suppressor genes (TSGs) or other tumor-related genes in colorectal cancer (CRC) cells. Required to maintain a transcriptionally repressive state of genes in undifferentiated embryonic stem cells (ESCs). In ESCs, in collaboration with SETDB1, is also required for H3K9me3 and silencing of endogenous and introduced retroviruses in a DNA-methylation independent-pathway. Associates at promoter regions of tumor suppressor genes (TSGs) leading to their gene silencing. The SETDB1-TRIM28-ZNF274 complex may play a role in recruiting ATRX to the 3'-exons of zinc-finger coding genes with atypical chromatin signatures to establish or maintain/protect H3K9me3 at these transcriptionally active regions. Functionally, (Microbial infection) Plays a critical role in the shutdown of lytic gene expression during the early stage of herpes virus 8 primary infection. This inhibition is mediated through interaction with herpes virus 8 protein LANA1. The polypeptide is Transcription intermediary factor 1-beta (Homo sapiens (Human)).